Reading from the N-terminus, the 391-residue chain is Polyisoprenyl-teichoic acid--peptidoglycan teichoic acid transferase TagV (391 aa).

Over 1-23 the chain is Cytoplasmic; sequence MAERVRVRVRKKKKSKRRKILKR. Residues 24–44 traverse the membrane as a helical; Signal-anchor for type II membrane protein segment; sequence IMLLFALALLVVVGLGGYKLY. Over 45–391 the chain is Extracellular; the sequence is KTINAADESY…TTNSTTDSSY (347 aa). Positions 329-391 are disordered; it reads DYTPDTSTGT…TTNSTTDSSY (63 aa). The span at 333–391 shows a compositional bias: low complexity; the sequence is DTSTGTSGTEDGTDSSSSSGSTGSTGTTTDGTTNGSSYSNDSSTSSNNSTTNSTTDSSY.

Belongs to the LytR/CpsA/Psr (LCP) family.

The protein resides in the cell membrane. Its pathway is cell wall biogenesis. Its function is as follows. May catalyze the final step in cell wall teichoic acid biosynthesis, the transfer of the anionic cell wall polymers (APs) from their lipid-linked precursor to the cell wall peptidoglycan (PG). The sequence is that of Polyisoprenyl-teichoic acid--peptidoglycan teichoic acid transferase TagV from Bacillus subtilis (strain 168).